The chain runs to 426 residues: UDP-N-acetylglucosamine 1-carboxyvinyltransferase (426 aa).

22–23 is a phosphoenolpyruvate binding site; the sequence is KN. Arg93 contributes to the UDP-N-acetyl-alpha-D-glucosamine binding site. Asp117 serves as the catalytic Proton donor. UDP-N-acetyl-alpha-D-glucosamine is bound by residues Asp312 and Met334.

This sequence belongs to the EPSP synthase family. MurA subfamily.

The protein localises to the cytoplasm. It catalyses the reaction phosphoenolpyruvate + UDP-N-acetyl-alpha-D-glucosamine = UDP-N-acetyl-3-O-(1-carboxyvinyl)-alpha-D-glucosamine + phosphate. The protein operates within cell wall biogenesis; peptidoglycan biosynthesis. In terms of biological role, cell wall formation. Adds enolpyruvyl to UDP-N-acetylglucosamine. The sequence is that of UDP-N-acetylglucosamine 1-carboxyvinyltransferase from Treponema denticola (strain ATCC 35405 / DSM 14222 / CIP 103919 / JCM 8153 / KCTC 15104).